The primary structure comprises 536 residues: DEAD-box ATP-dependent RNA helicase 41 (536 aa).

Basic and acidic residues predominate over residues 1–10; the sequence is MEQEENHSAD. The segment at 1–25 is disordered; the sequence is MEQEENHSADHLSAQPGNGNELEES. Residues 40–69 form an HIT-type zinc finger; it reads GEPRCVICGRYGEYICDQTDDDICSVECKT. The short motif at 137–165 is the Q motif element; the sequence is MCFSSSGLPEKLVLNLEAAGYVMPTPVQM. Residues 168-344 enclose the Helicase ATP-binding domain; that stretch reads IPSSICNRSL…NSLAKNAIHI (177 aa). ATP is bound at residue 181-188; that stretch reads ADTGSGKT. Positions 293-296 match the DEAD box motif; sequence DEVD. The Helicase C-terminal domain maps to 355–518; sequence SVKQVVIWVE…PIPRELANSK (164 aa).

This sequence belongs to the DEAD box helicase family. DDX59 subfamily.

It catalyses the reaction ATP + H2O = ADP + phosphate + H(+). The protein is DEAD-box ATP-dependent RNA helicase 41 of Oryza sativa subsp. japonica (Rice).